A 964-amino-acid chain; its full sequence is Glycine dehydrogenase (decarboxylating) (964 aa).

At Lys711 the chain carries N6-(pyridoxal phosphate)lysine.

Belongs to the GcvP family. In terms of assembly, the glycine cleavage system is composed of four proteins: P, T, L and H. Pyridoxal 5'-phosphate is required as a cofactor.

It carries out the reaction N(6)-[(R)-lipoyl]-L-lysyl-[glycine-cleavage complex H protein] + glycine + H(+) = N(6)-[(R)-S(8)-aminomethyldihydrolipoyl]-L-lysyl-[glycine-cleavage complex H protein] + CO2. Functionally, the glycine cleavage system catalyzes the degradation of glycine. The P protein binds the alpha-amino group of glycine through its pyridoxal phosphate cofactor; CO(2) is released and the remaining methylamine moiety is then transferred to the lipoamide cofactor of the H protein. This chain is Glycine dehydrogenase (decarboxylating), found in Prochlorococcus marinus (strain SARG / CCMP1375 / SS120).